Reading from the N-terminus, the 191-residue chain is Xanthine phosphoribosyltransferase (191 aa).

Positions 20 and 27 each coordinate xanthine. Position 128-132 (128-132 (ANGQA)) interacts with 5-phospho-alpha-D-ribose 1-diphosphate. Lys156 lines the xanthine pocket.

It belongs to the purine/pyrimidine phosphoribosyltransferase family. Xpt subfamily. In terms of assembly, homodimer.

It is found in the cytoplasm. It catalyses the reaction XMP + diphosphate = xanthine + 5-phospho-alpha-D-ribose 1-diphosphate. The protein operates within purine metabolism; XMP biosynthesis via salvage pathway; XMP from xanthine: step 1/1. Converts the preformed base xanthine, a product of nucleic acid breakdown, to xanthosine 5'-monophosphate (XMP), so it can be reused for RNA or DNA synthesis. In Acinetobacter baumannii (strain AB307-0294), this protein is Xanthine phosphoribosyltransferase.